We begin with the raw amino-acid sequence, 1416 residues long: K homology domain-containing protein 4 (1416 aa).

5 disordered regions span residues 25 to 76 (NPNG…TSMR), 108 to 174 (KAEA…TRSS), 196 to 225 (VNSS…LSQS), 255 to 320 (QNDE…FPGR), and 341 to 385 (SSLN…MPKP). Low complexity-rich tracts occupy residues 196 to 213 (VNSS…SANH), 273 to 285 (QSSF…LDQL), and 341 to 350 (SSLNPPASGS). Over residues 357–369 (GLSSAQPLRSPQP) the composition is skewed to polar residues. 5 consecutive KH domains span residues 412-504 (FKST…VILD), 508-594 (GLRS…QVSM), 747-816 (FEVR…EELP), 817-892 (AEMS…SVME), and 900-968 (DYIS…DHVP). 2 disordered regions span residues 1215–1240 (AGVS…SGHR) and 1289–1416 (HASG…FDRA). The span at 1219–1239 (VPTSGGIQFPSQPSLHQQSGH) shows a compositional bias: polar residues. The span at 1343–1374 (QQQAQQQLQYQQQQQQQQQQQQQPGYGMPHQP) shows a compositional bias: low complexity. Polar residues predominate over residues 1391–1402 (RNTQNPDSTTMD).

RNA-binding protein that recognizes the sequence AUACCC via its tandem KH domains 3 and 4, probably in order to promote mRNA instability. Plays an essential role in filamentous growth and virulence. This is K homology domain-containing protein 4 from Mycosarcoma maydis (Corn smut fungus).